Reading from the N-terminus, the 2471-residue chain is Neurogenic locus notch homolog protein 2 (2471 aa).

Positions 1–25 are cleaved as a signal peptide; sequence MPALRPALLWALLALWLCCAAPAHA. 4 EGF-like domains span residues 26–63, 64–102, 105–143, and 144–180; these read LQCR…EYCQ, HRDP…EDCQ, TSHP…KECQ, and WTDA…QKCE. Residues 26 to 1677 lie on the Extracellular side of the membrane; the sequence is LQCRDGYEPC…SESLTPERTQ (1652 aa). 84 cysteine pairs are disulfide-bonded: Cys-28–Cys-41, Cys-35–Cys-51, Cys-53–Cys-62, Cys-68–Cys-79, Cys-73–Cys-90, Cys-92–Cys-101, Cys-109–Cys-121, Cys-115–Cys-131, Cys-133–Cys-142, Cys-148–Cys-159, Cys-153–Cys-168, Cys-170–Cys-179, Cys-186–Cys-198, Cys-192–Cys-207, Cys-209–Cys-218, Cys-225–Cys-236, Cys-230–Cys-246, Cys-248–Cys-257, Cys-264–Cys-275, Cys-269–Cys-284, Cys-286–Cys-295, Cys-302–Cys-315, Cys-309–Cys-324, Cys-326–Cys-335, Cys-342–Cys-353, Cys-347–Cys-362, Cys-364–Cys-373, Cys-379–Cys-390, Cys-384–Cys-401, Cys-403–Cys-412, Cys-419–Cys-433, Cys-427–Cys-442, Cys-444–Cys-453, Cys-460–Cys-471, Cys-465–Cys-480, Cys-482–Cys-491, Cys-498–Cys-509, Cys-503–Cys-518, Cys-520–Cys-529, Cys-536–Cys-547, Cys-541–Cys-556, Cys-558–Cys-567, Cys-574–Cys-584, Cys-579–Cys-593, Cys-595–Cys-604, Cys-611–Cys-622, Cys-616–Cys-631, Cys-633–Cys-642, Cys-649–Cys-659, Cys-654–Cys-668, Cys-670–Cys-679, Cys-686–Cys-697, Cys-691–Cys-706, Cys-708–Cys-717, Cys-724–Cys-734, Cys-729–Cys-743, Cys-745–Cys-754, Cys-761–Cys-772, Cys-766–Cys-781, Cys-783–Cys-792, Cys-799–Cys-810, Cys-804–Cys-819, Cys-821–Cys-830, Cys-837–Cys-848, Cys-842–Cys-859, Cys-861–Cys-870, Cys-877–Cys-888, Cys-882–Cys-897, Cys-899–Cys-908, Cys-915–Cys-926, Cys-920–Cys-935, Cys-937–Cys-946, Cys-953–Cys-964, Cys-958–Cys-973, Cys-975–Cys-984, Cys-991–Cys-1002, Cys-996–Cys-1011, Cys-1013–Cys-1022, Cys-1029–Cys-1040, Cys-1034–Cys-1049, Cys-1051–Cys-1060, Cys-1067–Cys-1078, Cys-1072–Cys-1087, and Cys-1089–Cys-1098. N-linked (GlcNAc...) asparagine glycosylation is present at Asn-46. A glycan (N-linked (GlcNAc...) asparagine) is linked at Asn-155. An EGF-like 5; calcium-binding domain is found at 182–219; it reads DVNECDIPGHCQHGGTCLNLPGSYQCQCPQGFTGQYCD. The region spanning 221-258 is the EGF-like 6 domain; it reads LYVPCAPSPCVNGGTCRQTGDFTFECNCLPGFEGSTCE. One can recognise an EGF-like 7; calcium-binding domain in the interval 260-296; it reads NIDDCPNHRCQNGGVCVDGVNTYNCRCPPQWTGQFCT. The 39-residue stretch at 298–336 folds into the EGF-like 8; calcium-binding domain; that stretch reads DVDECLLQPNACQNGGTCANRNGGYGCVCVNGWSGDDCS. Positions 338–374 constitute an EGF-like 9; calcium-binding domain; it reads NIDDCAFASCTPGSTCIDRVASFSCMCPEGKAGLLCH. Positions 375-413 constitute an EGF-like 10 domain; that stretch reads LDDACISNPCHKGALCDTNPLNGQYICTCPQGYKGADCT. In terms of domain architecture, EGF-like 11; calcium-binding spans 415-454; sequence DVDECAMANSNPCEHAGKCVNTDGAFHCECLKGYAGPRCE. An EGF-like 12; calcium-binding domain is found at 456–492; it reads DINECHSDPCQNDATCLDKIGGFTCLCMPGFKGVHCE. The EGF-like 13; calcium-binding domain occupies 494–530; that stretch reads EINECQSNPCVNNGQCVDKVNRFQCLCPPGFTGPVCQ. The EGF-like 14; calcium-binding domain occupies 532 to 568; that stretch reads DIDDCSSTPCLNGAKCIDHPNGYECQCATGFTGVLCE. Residues 570–605 form the EGF-like 15; calcium-binding domain; it reads NIDNCDPDPCHHGQCQDGIDSYTCICNPGYMGAICS. An EGF-like 16; calcium-binding domain is found at 607-643; it reads QIDECYSSPCLNDGRCIDLVNGYQCNCQPGTSGVNCE. An O-linked (Glc...) serine; alternate glycan is attached at Ser-613. Ser-613 carries an O-linked (Xyl...) serine; alternate glycan. The region spanning 645–680 is the EGF-like 17; calcium-binding domain; sequence NFDDCASNPCIHGICMDGINRYSCVCSPGFTGQRCN. The EGF-like 18; calcium-binding domain maps to 682 to 718; that stretch reads DIDECASNPCRKGATCINGVNGFRCICPEGPHHPSCY. Positions 720–755 constitute an EGF-like 19 domain; that stretch reads QVNECLSNPCIHGNCTGGLSGYKCLCDAGWVGINCE. An N-linked (GlcNAc...) asparagine glycan is attached at Asn-733. Residues 757–793 enclose the EGF-like 20; calcium-binding domain; the sequence is DKNECLSNPCQNGGTCDNLVNGYRCTCKKGFKGYNCQ. An EGF-like 21; calcium-binding domain is found at 795–831; it reads NIDECASNPCLNQGTCFDDISGYTCHCVLPYTGKNCQ. In terms of domain architecture, EGF-like 22 spans 833–871; it reads VLAPCSPNPCENAAVCKESPNFESYTCLCAPGWQGQRCT. In terms of domain architecture, EGF-like 23; calcium-binding spans 873 to 909; that stretch reads DIDECISKPCMNHGLCHNTQGSYMCECPPGFSGMDCE. The 37-residue stretch at 911-947 folds into the EGF-like 24; calcium-binding domain; the sequence is DIDDCLANPCQNGGSCMDGVNTFSCLCLPGFTGDKCQ. One can recognise an EGF-like 25; calcium-binding domain in the interval 949–985; it reads DMNECLSEPCKNGGTCSDYVNSYTCKCQAGFDGVHCE. Positions 987–1023 constitute an EGF-like 26; calcium-binding domain; sequence NINECTESSCFNGGTCVDGINSFSCLCPVGFTGSFCL. An EGF-like 27; calcium-binding domain is found at 1025–1061; that stretch reads EINECSSHPCLNEGTCVDGLGTYRCSCPLGYTGKNCQ. EGF-like domains are found at residues 1063 to 1099 and 1101 to 1147; these read LVNL…AYCD and PNVS…SYCE. Asn-1102 carries an N-linked (GlcNAc...) asparagine glycan. 24 disulfides stabilise this stretch: Cys-1105–Cys-1126, Cys-1120–Cys-1135, Cys-1137–Cys-1146, Cys-1153–Cys-1164, Cys-1158–Cys-1173, Cys-1175–Cys-1184, Cys-1191–Cys-1202, Cys-1196–Cys-1211, Cys-1213–Cys-1222, Cys-1229–Cys-1241, Cys-1235–Cys-1250, Cys-1252–Cys-1261, Cys-1268–Cys-1281, Cys-1273–Cys-1290, Cys-1292–Cys-1301, Cys-1308–Cys-1319, Cys-1313–Cys-1331, Cys-1333–Cys-1342, Cys-1378–Cys-1389, Cys-1383–Cys-1400, Cys-1402–Cys-1411, Cys-1425–Cys-1448, Cys-1430–Cys-1443, and Cys-1439–Cys-1455. Residues 1149-1185 form the EGF-like 30; calcium-binding domain; that stretch reads QLDECASNPCQHGATCSDFIGGYRCECVPGYQGVNCE. Residues 1187–1223 enclose the EGF-like 31; calcium-binding domain; the sequence is EVDECQNQPCQNGGTCIDLVNHFKCSCPPGTRGLLCE. The EGF-like 32; calcium-binding domain occupies 1225–1262; sequence NIDDCARGPHCLNGGQCMDRIGGYSCRCLPGFAGERCE. EGF-like domains are found at residues 1264 to 1302, 1304 to 1343, and 1374 to 1412; these read DINE…RHCE, FVDV…ARCQ, and CESG…SRCE. LNR repeat units lie at residues 1425 to 1465, 1466 to 1502, and 1503 to 1544; these read CLSQ…PWAN, CSSP…NSKT, and CKYD…NLAE. A negative regulatory region (NRR) region spans residues 1425–1677; sequence CLSQYCADKA…SESLTPERTQ (253 aa). The N-linked (GlcNAc...) asparagine glycan is linked to Asn-1465. 7 disulfide bridges follow: Cys-1466–Cys-1489, Cys-1472–Cys-1484, Cys-1480–Cys-1496, Cys-1503–Cys-1527, Cys-1509–Cys-1522, Cys-1518–Cys-1534, and Cys-1632–Cys-1639. Residues 1678–1698 form a helical membrane-spanning segment; sequence LLYLLAVAVVIILFIILLGVI. The Cytoplasmic portion of the chain corresponds to 1699–2471; it reads MAKRKRKHGS…PPHNNMQVYA (773 aa). Thr-1716 is subject to Phosphothreonine. The interval 1754–1788 is disordered; it reads TSEHWVDDEGPQPKKVKAEDEALLSEEDDPIDRRP. Residues 1774-1783 are compositionally biased toward acidic residues; that stretch reads EALLSEEDDP. Ser-1778 is modified (phosphoserine). Thr-1802 carries the phosphothreonine modification. The residue at position 1804 (Ser-1804) is a Phosphoserine. Thr-1808 carries the post-translational modification Phosphothreonine. 6 ANK repeats span residues 1827–1871, 1876–1905, 1909–1939, 1943–1972, 1976–2005, and 2009–2038; these read DGCT…SLQA, TGEM…DANA, MGRC…DLDA, DGTT…DVNA, HGKS…NRDM, and KEET…NRDI. Phosphoserine occurs at positions 1842 and 1845. Ser-2070, Ser-2078, and Ser-2081 each carry phosphoserine. Disordered stretches follow at residues 2091–2168 and 2380–2471; these read FLSL…TSSP and VGKY…QVYA. The residue at position 2097 (Thr-2097) is a Phosphothreonine. Residues 2098–2107 show a composition bias toward basic residues; sequence PMGKKSRRPS. 4 stretches are compositionally biased toward polar residues: residues 2108–2117, 2137–2150, 2159–2168, and 2388–2406; these read AKSTMPTSLP, EKVQ…TLSP, TYVSDTTSSP, and SQHS…SHSG. Residues 2417 to 2445 are compositionally biased toward low complexity; sequence PSPESPDQWSSSSPHSASDWSDVTTSPTP.

It belongs to the NOTCH family. In terms of assembly, heterodimer of a C-terminal fragment N(TM) and an N-terminal fragment N(EC) which are probably linked by disulfide bonds. Interacts with MAML1, MAML2 and MAML3 which act as transcriptional coactivators for NOTCH2. Interacts with RELA/p65. Interacts with HIF1AN. Interacts (via ANK repeats) with TCIM, the interaction inhibits the nuclear translocation of NOTCH2 N2ICD. Interacts with CUL1, RBX1, SKP1 and FBXW7 that are SCF(FBXW7) E3 ubiquitin-protein ligase complex components. Interacts with MINAR1; this interaction increases MINAR1 stability and function. Interacts with NOTCH2NL (NOTCH2NLA, NOTCH2NLB and/or NOTCH2NLC); leading to enhance Notch signaling pathway in a non-cell-autonomous manner. Interacts with MDK; this interaction mediates a nuclear accumulation of NOTCH2 and therefore activation of NOTCH2 signaling leading to interaction between HES1 and STAT3. Interacts with MINAR2. In terms of processing, synthesized in the endoplasmic reticulum as an inactive form which is proteolytically cleaved by a furin-like convertase in the trans-Golgi network before it reaches the plasma membrane to yield an active, ligand-accessible form. Cleavage results in a C-terminal fragment N(TM) and a N-terminal fragment N(EC). Following ligand binding, it is cleaved by TNF-alpha converting enzyme (TACE) to yield a membrane-associated intermediate fragment called notch extracellular truncation (NEXT). This fragment is then cleaved by presenilin dependent gamma-secretase to release a notch-derived peptide containing the intracellular domain (NICD) from the membrane. Post-translationally, hydroxylated by HIF1AN. Can be either O-glucosylated or O-xylosylated at Ser-613 by POGLUT1. In terms of processing, phosphorylated by GSK3. GSK3-mediated phosphorylation is necessary for NOTCH2 recognition by FBXW7, ubiquitination and degradation via the ubiquitin proteasome pathway. In terms of tissue distribution, expressed in the brain, heart, kidney, lung, skeletal muscle and liver. Ubiquitously expressed in the embryo.

It is found in the cell membrane. The protein localises to the nucleus. It localises to the cytoplasm. Functions as a receptor for membrane-bound ligands Jagged-1 (JAG1), Jagged-2 (JAG2) and Delta-1 (DLL1) to regulate cell-fate determination. Upon ligand activation through the released notch intracellular domain (NICD) it forms a transcriptional activator complex with RBPJ/RBPSUH and activates genes of the enhancer of split locus. Affects the implementation of differentiation, proliferation and apoptotic programs. Involved in bone remodeling and homeostasis. In collaboration with RELA/p65 enhances NFATc1 promoter activity and positively regulates RANKL-induced osteoclast differentiation. Positively regulates self-renewal of liver cancer cells. This chain is Neurogenic locus notch homolog protein 2, found in Homo sapiens (Human).